The sequence spans 614 residues: DNA repair protein rad26 (614 aa).

Residues 29-43 show a composition bias toward low complexity; sequence QAQTQVQAQSSQVVV. Disordered regions lie at residues 29 to 76 and 157 to 214; these read QAQT…QASL and KKMK…TAED. Composition is skewed to polar residues over residues 50-76 and 181-190; these read QNLN…QASL and LLSSSDQLAK. A compositionally biased stretch (basic residues) spans 191–207; the sequence is STKHAAKNSPSKKKRKT.

As to quaternary structure, interacts with cds1.

It is found in the nucleus. In terms of biological role, involved in cell cycle arrest when DNA synthesis is inhibited by hydroxyurea, and in mitosis arrest after treatment with DNA-damaging agents. This protein is S phase-specific. In Schizosaccharomyces pombe (strain 972 / ATCC 24843) (Fission yeast), this protein is DNA repair protein rad26 (rad26).